The sequence spans 404 residues: CD209 antigen (404 aa).

Topologically, residues 1–37 (MSDSKEPSVQQLGLLEEEQLRGLGFRQTRGYKSLAGC) are cytoplasmic. 3 short sequence motifs (endocytosis signal) span residues 14–15 (LL), 16–18 (EEE), and 31–34 (YKSL). The helical; Signal-anchor for type II membrane protein transmembrane segment at 38-58 (LGHGALVLQLLSFTLLAGLLI) threads the bilayer. Residues 59–404 (QVSKFPSSIS…APATPNPPPA (346 aa)) are Extracellular-facing. A glycan (N-linked (GlcNAc...) asparagine) is linked at N80. Tandem repeats lie at residues 96 to 118 (KLQEIYQELTQLKAAVGELPEKS), 119 to 141 (KQQEIYQELTQLKAAVGELPEKS), 142 to 164 (KQQEIYQELTQLKAAVGELPEKS), 165 to 187 (KQQEIYQELTRLKAAVGELPEKS), 188 to 210 (QQQEIYQELTQLKAAVGELPEKS), 211 to 233 (KQQEIYQELTRLKAAVGELPEKS), and 234 to 257 (KQQEIYQELTQLKAAVERLCRPCP). Residues 96 to 257 (KLQEIYQELT…AVERLCRPCP (162 aa)) are 7 X approximate tandem repeats. 3 disulfides stabilise this stretch: C256–C267, C284–C377, and C356–C369. In terms of domain architecture, C-type lectin spans 263–378 (FQGNCYFMSN…CNLAKFWICK (116 aa)). The Ca(2+) site is built by E347, N349, V351, E354, N365, and D366.

As to quaternary structure, homotetramer. Interacts with C1QBP; the interaction is indicative for a C1q:C1QBP:CD209 signaling complex. Interacts with ICAM2 and ICAM3 by binding to mannose-like carbohydrates. Interacts (via C-type lectin domain) with CEACAM1 (via Lewis X moieties); this interaction is regulated by the glycosylation pattern of CEACAM1 on cell types and regulates contact between dendritic cells and neutrophils.

Its subcellular location is the membrane. Pathogen-recognition receptor expressed on the surface of immature dendritic cells (DCs) and involved in initiation of primary immune response. Thought to mediate the endocytosis of pathogens which are subsequently degraded in lysosomal compartments. The receptor returns to the cell membrane surface and the pathogen-derived antigens are presented to resting T-cells via MHC class II proteins to initiate the adaptive immune response. Probably recognizes in a calcium-dependent manner high mannose N-linked oligosaccharides in a variety of pathogen antigens. Its function is as follows. On DCs it is a high affinity receptor for ICAM2 and ICAM3 by binding to mannose-like carbohydrates. May act as a DC rolling receptor that mediates transendothelial migration of DC presursors from blood to tissues by binding endothelial ICAM2. Seems to regulate DC-induced T-cell proliferation by binding to ICAM3 on T-cells in the immunological synapse formed between DC and T-cells. In Nomascus concolor (Black crested gibbon), this protein is CD209 antigen (CD209).